A 165-amino-acid chain; its full sequence is Acireductone dioxygenase (165 aa).

Residues His90, His92, Glu96, and His134 each coordinate Fe(2+). 4 residues coordinate Ni(2+): His90, His92, Glu96, and His134.

Belongs to the acireductone dioxygenase (ARD) family. Monomer. Requires Fe(2+) as cofactor. Ni(2+) is required as a cofactor.

It carries out the reaction 1,2-dihydroxy-5-(methylsulfanyl)pent-1-en-3-one + O2 = 3-(methylsulfanyl)propanoate + CO + formate + 2 H(+). It catalyses the reaction 1,2-dihydroxy-5-(methylsulfanyl)pent-1-en-3-one + O2 = 4-methylsulfanyl-2-oxobutanoate + formate + 2 H(+). It functions in the pathway amino-acid biosynthesis; L-methionine biosynthesis via salvage pathway; L-methionine from S-methyl-5-thio-alpha-D-ribose 1-phosphate: step 5/6. Its function is as follows. Catalyzes 2 different reactions between oxygen and the acireductone 1,2-dihydroxy-3-keto-5-methylthiopentene (DHK-MTPene) depending upon the metal bound in the active site. Fe-containing acireductone dioxygenase (Fe-ARD) produces formate and 2-keto-4-methylthiobutyrate (KMTB), the alpha-ketoacid precursor of methionine in the methionine recycle pathway. Ni-containing acireductone dioxygenase (Ni-ARD) produces methylthiopropionate, carbon monoxide and formate, and does not lie on the methionine recycle pathway. This chain is Acireductone dioxygenase, found in Rhodopseudomonas palustris (strain ATCC BAA-98 / CGA009).